The following is a 332-amino-acid chain: 2,3-diketo-L-gulonate reductase (332 aa).

His-44 functions as the Proton donor in the catalytic mechanism. NAD(+) is bound by residues 168 to 174, 224 to 225, and 304 to 306; these read ITMVDMS, WK, and GHE.

This sequence belongs to the LDH2/MDH2 oxidoreductase family. DlgD subfamily. Homodimer.

The protein localises to the cytoplasm. It catalyses the reaction 3-dehydro-L-gulonate + NAD(+) = 2,3-dioxo-L-gulonate + NADH + H(+). The catalysed reaction is 3-dehydro-L-gulonate + NADP(+) = 2,3-dioxo-L-gulonate + NADPH + H(+). In terms of biological role, catalyzes the reduction of 2,3-diketo-L-gulonate in the presence of NADH, to form 3-keto-L-gulonate. The chain is 2,3-diketo-L-gulonate reductase from Salmonella newport (strain SL254).